The sequence spans 61 residues: Large ribosomal subunit protein uL30 (61 aa).

This sequence belongs to the universal ribosomal protein uL30 family. As to quaternary structure, part of the 50S ribosomal subunit.

This is Large ribosomal subunit protein uL30 from Treponema pallidum subsp. pallidum (strain SS14).